The primary structure comprises 406 residues: Cysteine desulfurase IscS (406 aa).

Residues 75–76 (AT), N155, Q183, and 203–205 (SSH) contribute to the pyridoxal 5'-phosphate site. K206 bears the N6-(pyridoxal phosphate)lysine mark. Pyridoxal 5'-phosphate is bound at residue T243. Residue C330 is the Cysteine persulfide intermediate of the active site. Position 330 (C330) interacts with [2Fe-2S] cluster.

It belongs to the class-V pyridoxal-phosphate-dependent aminotransferase family. NifS/IscS subfamily. As to quaternary structure, homodimer. Forms a heterotetramer with IscU, interacts with other sulfur acceptors. The cofactor is pyridoxal 5'-phosphate.

Its subcellular location is the cytoplasm. The catalysed reaction is (sulfur carrier)-H + L-cysteine = (sulfur carrier)-SH + L-alanine. It participates in cofactor biosynthesis; iron-sulfur cluster biosynthesis. In terms of biological role, master enzyme that delivers sulfur to a number of partners involved in Fe-S cluster assembly, tRNA modification or cofactor biosynthesis. Catalyzes the removal of elemental sulfur atoms from cysteine to produce alanine. Functions as a sulfur delivery protein for Fe-S cluster synthesis onto IscU, an Fe-S scaffold assembly protein, as well as other S acceptor proteins. The polypeptide is Cysteine desulfurase IscS (Glaesserella parasuis serovar 5 (strain SH0165) (Haemophilus parasuis)).